The sequence spans 705 residues: Complement C1r subcomponent (705 aa).

Residues 1 to 17 form the signal peptide; it reads MWLLYLLVPALFCRAGG. The region spanning 18–141 is the CUB 1 domain; that stretch reads SIPIPQKLFG…KGFLAYYQAV (124 aa). Positions 66, 74, and 119 each coordinate Ca(2+). The cysteines at positions 71 and 89 are disulfide-linked. N125 carries N-linked (GlcNAc...) asparagine glycosylation. D142, L143, and E145 together coordinate Ca(2+). Residues 142 to 190 form the EGF-like; calcium-binding domain; the sequence is DLDECASRSKSGEEDPQPQCQHLCHNYVGGYFCSCRPGYELQEDTHSCQ. Disulfide bonds link C146-C165, C161-C174, C176-C189, and C193-C220. Positions 167, 168, and 171 each coordinate Ca(2+). (3R)-3-hydroxyasparagine is present on N167. The region spanning 193–305 is the CUB 2 domain; the sequence is CSSELYTEAS…RGWKLRYTTE (113 aa). S206 bears the Phosphoserine; by CK2 mark. N-linked (GlcNAc...) asparagine glycosylation occurs at N221. Ca(2+)-binding residues include D243, D253, D290, and D294. A disulfide bond links C250 and C268. Sushi domains lie at 307-373 and 374-449; these read IKCP…RCKI and KDCG…RCLP. Intrachain disulfides connect C309–C358, C338–C371, C376–C429, C406–C447, and C451–C577. One can recognise a Peptidase S1 domain in the interval 464-702; that stretch reads IIGGQKAKMG…YVDWIKKEME (239 aa). H502 functions as the Charge relay system in the catalytic mechanism. N-linked (GlcNAc...) asparagine glycosylation occurs at N514. The active-site Charge relay system is the D557. N-linked (GlcNAc...) asparagine glycosylation is present at N581. 2 disulfides stabilise this stretch: C620-C639 and C650-C680. S654 serves as the catalytic Charge relay system.

This sequence belongs to the peptidase S1 family. Core component of the complement C1 complex, a calcium-dependent complex composed of 1 molecule of the C1Q subcomplex, 2 molecules of C1R and 2 molecules of C1S. The C1Q subcomplex is composed 18 subunits: 3 chains of C1QA, C1QB, and C1QC trimerize to form 6 collagen-like triple helices connected to six globular ligand-recognition modules. Within the C1 complex, C1R is a dimer of identical chains, each of which is activated by cleavage into two chains, heavy and light, connected by disulfide bonds. Cleaved and activated by autocatalytic processing to generate Complement C1r subcomponent heavy and light chains that are connected by disulfide bonds. In terms of processing, the iron and 2-oxoglutarate dependent 3-hydroxylation of aspartate and asparagine is (R) stereospecific within EGF domains.

It is found in the secreted. The protein resides in the cell surface. The catalysed reaction is Selective cleavage of Lys(or Arg)-|-Ile bond in complement subcomponent C1s to form the active form of C1s (EC 3.4.21.42).. With respect to regulation, activated by the C1Q subcomplex of the C1 complex following C1Q binding to immunoglobulins (IgG or IgM) complexed with antigens to form antigen-antibody complexes on the surface of pathogens. Immunoglobulin-binding promotes autoactivation of C1R, which results in the cleavage of the Arg-Ile bond in the catalytic domain. In terms of biological role, serine protease component of the complement C1 complex, a multiprotein complex that initiates the classical pathway of the complement system, a cascade of proteins that leads to phagocytosis and breakdown of pathogens and signaling that strengthens the adaptive immune system. C1R catalyzes the first enzymatic step in the classical complement pathway: it is activated by the C1Q subcomplex of the C1 complex, which associates with IgG or IgM immunoglobulins complexed with antigens to form antigen-antibody complexes on the surface of pathogens. Immunoglobulin-binding promotes the autocatalytic cleavage and activation of C1R. Activated C1R then cleaves and activates C1S, the second protease of the classical complement pathway. It is unclear if C1R activates C1S within single, strained C1 complexes or between neighboring C1 complexes on surfaces. This Homo sapiens (Human) protein is Complement C1r subcomponent.